Reading from the N-terminus, the 263-residue chain is Probable septum site-determining protein MinC (263 aa).

A disordered region spans residues 107-159; the sequence is LPPSGARERPLDIKDSAPRKPAEEPSPSAGEARPEPAKAEEKPADPVSRPTKV. Composition is skewed to basic and acidic residues over residues 112–129 and 138–150; these read ARERPLDIKDSAPRKPAE and ARPEPAKAEEKPA.

It belongs to the MinC family. Interacts with MinD and FtsZ.

Cell division inhibitor that blocks the formation of polar Z ring septums. Rapidly oscillates between the poles of the cell to destabilize FtsZ filaments that have formed before they mature into polar Z rings. Prevents FtsZ polymerization. The sequence is that of Probable septum site-determining protein MinC from Pseudomonas aeruginosa (strain UCBPP-PA14).